The chain runs to 380 residues: Chorismate synthase (380 aa).

NADP(+) contacts are provided by Arg48 and Arg53. FMN-binding positions include 126–128, Gly284, 299–303, and Arg326; these read RAS and KPTSS.

It belongs to the chorismate synthase family. Requires FMNH2 as cofactor.

The enzyme catalyses 5-O-(1-carboxyvinyl)-3-phosphoshikimate = chorismate + phosphate. It functions in the pathway metabolic intermediate biosynthesis; chorismate biosynthesis; chorismate from D-erythrose 4-phosphate and phosphoenolpyruvate: step 7/7. Its function is as follows. Catalyzes the anti-1,4-elimination of the C-3 phosphate and the C-6 proR hydrogen from 5-enolpyruvylshikimate-3-phosphate (EPSP) to yield chorismate, which is the branch point compound that serves as the starting substrate for the three terminal pathways of aromatic amino acid biosynthesis. This reaction introduces a second double bond into the aromatic ring system. This is Chorismate synthase from Ignicoccus hospitalis (strain KIN4/I / DSM 18386 / JCM 14125).